We begin with the raw amino-acid sequence, 303 residues long: MTEIVADKTVEVVKNAIETADGALDLYNKYLDQVIPWQTFDETIKELSRFKQEYSQAASVLVGDIKTLLMDSQDKYFEATQTVYEWCGVATQLLAAYILLFDEYNEKKASAQKDILIKVLDDGITKLNEAQKSLLVSSQSFNNASGKLLALDSQLTNDFSEKSSYFQSQVDKIRKEAYAGAAAGVVAGPFGLIISYSIAAGVVEGKLIPELKNKLKSVQNFFTTLSNTVKQANKDIDAAKLKLTTEIAAIGEIKTETETTRFYVDYDDLMLSLLKEAAKKMINTCNEYQKRHGKKTLFEVPEV.

Cysteines 87 and 285 form a disulfide. The chain crosses the membrane as a helical span at residues 183–203; it reads AGVVAGPFGLIISYSIAAGVV.

As to quaternary structure, monomer and oligomer. In periplasm, it is present as a monomer, while in outer membrane vesicles, it oligomerizes to form a pore structure that is active. The pore is formed by a dodecamer. Post-translationally, in periplasm, it forms a disulfide bond between Cys-87 and Cys-285, which prevents the oligomerization. In outer membrane vesicles, the redox status prevents formation of the disulfide bond, leading to oligomerization and pore formation.

It is found in the secreted. The protein localises to the periplasm. Its subcellular location is the host cell membrane. Its function is as follows. Toxin, which has some hemolytic activity towards mammalian cells. Acts by forming a pore-like structure upon contact with mammalian cells. The chain is Hemolysin E, chromosomal (hlyE) from Escherichia coli (strain K12).